The chain runs to 407 residues: Probable beta-1,3-galactosyltransferase 4 (407 aa).

A helical; Signal-anchor for type II membrane protein transmembrane segment spans residues Trp-23 to Ser-39.

It belongs to the glycosyltransferase 31 family. Mn(2+) serves as cofactor.

The protein localises to the golgi apparatus membrane. Its pathway is protein modification; protein glycosylation. Functionally, beta-1,3-galactosyltransferase that transfers galactose from UDP-galactose to substrates with a terminal glycosyl residue. This Arabidopsis thaliana (Mouse-ear cress) protein is Probable beta-1,3-galactosyltransferase 4 (B3GALT4).